Reading from the N-terminus, the 151-residue chain is Ribosomal RNA large subunit methyltransferase H (151 aa).

S-adenosyl-L-methionine is bound by residues Leu73, Gly100, and 119–124 (LSKMTM).

The protein belongs to the RNA methyltransferase RlmH family. As to quaternary structure, homodimer.

It localises to the cytoplasm. It catalyses the reaction pseudouridine(1915) in 23S rRNA + S-adenosyl-L-methionine = N(3)-methylpseudouridine(1915) in 23S rRNA + S-adenosyl-L-homocysteine + H(+). Its function is as follows. Specifically methylates the pseudouridine at position 1915 (m3Psi1915) in 23S rRNA. This is Ribosomal RNA large subunit methyltransferase H from Campylobacter concisus (strain 13826).